Reading from the N-terminus, the 119-residue chain is Endocuticle structural glycoprotein SgAbd-3 (119 aa).

At glutamine 1 the chain carries Pyrrolidone carboxylic acid. The Chitin-binding type R&amp;R domain occupies 24–98 (DGSYRYSFET…PQGAHLPTPP (75 aa)). Positions 33–55 (TSDGQRASQEGALKQVSAPGPDG) are disordered. Residue threonine 96 is glycosylated (O-linked (HexNAc...) threonine).

Functionally, component of the abdominal endocuticle. The protein is Endocuticle structural glycoprotein SgAbd-3 of Schistocerca gregaria (Desert locust).